A 300-amino-acid polypeptide reads, in one-letter code: uncharacterized protein (300 aa).

The interval 230–251 is disordered; the sequence is LRQSTSRQSISRQSISRQSTSR. The span at 231–251 shows a compositional bias: low complexity; the sequence is RQSTSRQSISRQSISRQSTSR.

This is an uncharacterized protein from Acanthamoeba polyphaga (Amoeba).